A 163-amino-acid polypeptide reads, in one-letter code: Small ribosomal subunit protein uS5 (163 aa).

In terms of domain architecture, S5 DRBM spans 8-71 (FIEKVVSLNR…EQARKAMMKI (64 aa)).

This sequence belongs to the universal ribosomal protein uS5 family. Part of the 30S ribosomal subunit. Contacts proteins S4 and S8.

Its function is as follows. With S4 and S12 plays an important role in translational accuracy. Functionally, located at the back of the 30S subunit body where it stabilizes the conformation of the head with respect to the body. The sequence is that of Small ribosomal subunit protein uS5 from Lawsonia intracellularis (strain PHE/MN1-00).